Reading from the N-terminus, the 329-residue chain is Ubiquinol oxidase 1c, mitochondrial (329 aa).

The N-terminal 45 residues, 1-45 (MITTLLRRSLLDASKQATSINGILFHQLAPAKYFRVPAVGGLRDF), are a transit peptide targeting the mitochondrion. Residues 154–174 (AIMLETVAAVPGMVGGMLMHF) form a helical membrane-spanning segment. Fe cation contacts are provided by Glu158, Glu197, and His200. Residues 216-236 (ALVISVQGVFFNAYLIGYIIS) form a helical membrane-spanning segment. Glu248, Glu299, and His302 together coordinate Fe cation.

The protein belongs to the alternative oxidase family. In terms of assembly, homodimer; disulfide-linked. Requires Fe cation as cofactor. As to expression, expressed in roots, stems, leaves, cotyledons and flowers. High expression in stamens.

The protein localises to the mitochondrion inner membrane. The enzyme catalyses 2 a ubiquinol + O2 = 2 a ubiquinone + 2 H2O. In terms of biological role, catalyzes the cyanide-resistant oxidation of ubiquinol and the reduction of molecular oxygen to water, but does not translocate protons and consequently is not linked to oxidative phosphorylation. May increase respiration when the cytochrome respiratory pathway is restricted, or in response to low temperatures. The chain is Ubiquinol oxidase 1c, mitochondrial (AOX1C) from Arabidopsis thaliana (Mouse-ear cress).